The primary structure comprises 439 residues: GTPase Der (439 aa).

EngA-type G domains lie at 3-167 (PTVA…DKVG) and 176-351 (IKVA…GNYT). Residues 9–16 (GRPNVGKS), 56–60 (DTGGI), 119–122 (NKID), 182–189 (GKPNTGKS), 229–233 (DTAGL), and 294–297 (NKWD) contribute to the GTP site. A KH-like domain is found at 352–436 (RRITTGQIND…PIVFLIREKG (85 aa)).

The protein belongs to the TRAFAC class TrmE-Era-EngA-EngB-Septin-like GTPase superfamily. EngA (Der) GTPase family. In terms of assembly, associates with the 50S ribosomal subunit.

In terms of biological role, GTPase that plays an essential role in the late steps of ribosome biogenesis. The polypeptide is GTPase Der (Caldicellulosiruptor saccharolyticus (strain ATCC 43494 / DSM 8903 / Tp8T 6331)).